The following is a 333-amino-acid chain: Lipoyl synthase (333 aa).

Positions 1-15 (MSTLVESPVPSNDSQ) are enriched in polar residues. The disordered stretch occupies residues 1 to 34 (MSTLVESPVPSNDSQAAAPAAYDPTQKQKSQAKT). Positions 80, 85, 91, 106, 110, 113, and 320 each coordinate [4Fe-4S] cluster. One can recognise a Radical SAM core domain in the interval 91-309 (CFGKGTATFM…EREAYAMGFT (219 aa)).

The protein belongs to the radical SAM superfamily. Lipoyl synthase family. The cofactor is [4Fe-4S] cluster.

It localises to the cytoplasm. It catalyses the reaction [[Fe-S] cluster scaffold protein carrying a second [4Fe-4S](2+) cluster] + N(6)-octanoyl-L-lysyl-[protein] + 2 oxidized [2Fe-2S]-[ferredoxin] + 2 S-adenosyl-L-methionine + 4 H(+) = [[Fe-S] cluster scaffold protein] + N(6)-[(R)-dihydrolipoyl]-L-lysyl-[protein] + 4 Fe(3+) + 2 hydrogen sulfide + 2 5'-deoxyadenosine + 2 L-methionine + 2 reduced [2Fe-2S]-[ferredoxin]. It functions in the pathway protein modification; protein lipoylation via endogenous pathway; protein N(6)-(lipoyl)lysine from octanoyl-[acyl-carrier-protein]: step 2/2. Its function is as follows. Catalyzes the radical-mediated insertion of two sulfur atoms into the C-6 and C-8 positions of the octanoyl moiety bound to the lipoyl domains of lipoate-dependent enzymes, thereby converting the octanoylated domains into lipoylated derivatives. This chain is Lipoyl synthase, found in Bordetella bronchiseptica (strain ATCC BAA-588 / NCTC 13252 / RB50) (Alcaligenes bronchisepticus).